The following is a 523-amino-acid chain: Keratin, type II cytoskeletal 71 (523 aa).

Residues 1–129 form a head region; it reads MSRQFTCKSG…DPEIQKVRAQ (129 aa). Residues 130-165 form a coil 1A region; sequence EREQIKALNNKFASFIDKVRFLEQQNQVLETKWELL. An IF rod domain is found at 130 to 443; the sequence is EREQIKALNN…KLLESEECRM (314 aa). A linker 1 region spans residues 166–184; that stretch reads QQLDLNNCKNNLEPILEGY. The coil 1B stretch occupies residues 185–276; it reads ISNLRKQLET…CLFEAEITQI (92 aa). The segment at 277–300 is linker 12; the sequence is QSHISDMSVILSMDNNRNLDLDSI. Positions 301–439 are coil 2; sequence IDEVRTQYEE…ATYRKLLESE (139 aa). The segment at 440–523 is tail; it reads ECRMSGEFPS…LSAPSKKTSR (84 aa). Residues 492–523 form a disordered region; it reads GGEGRSRGSANDYKDTLGKGSSLSAPSKKTSR. Basic and acidic residues predominate over residues 493–508; it reads GEGRSRGSANDYKDTL. Residues 510–523 are compositionally biased toward polar residues; the sequence is KGSSLSAPSKKTSR.

Belongs to the intermediate filament family. Heterodimer of a type I and a type II keratin. Associates with KRT16 and/or KRT17. As to expression, highly expressed in hair follicles from scalp. Specifically expressed in the inner root sheath (IRS) of the hair follicle. Present in the all 3 IRS layers: the cuticle, the Henle and the Huxley layers. Also detected in the pseudopods of specialized Huxley cells, termed Fluegelzellen, along the area of differentiated Henle cells (at protein level).

The protein resides in the cytoplasm. It localises to the cytoskeleton. Functionally, plays a central role in hair formation. Essential component of keratin intermediate filaments in the inner root sheath (IRS) of the hair follicle. The sequence is that of Keratin, type II cytoskeletal 71 (KRT71) from Homo sapiens (Human).